We begin with the raw amino-acid sequence, 365 residues long: Chorismate synthase (365 aa).

R46 contributes to the NADP(+) binding site. Residues 123-125 (RSS), 241-242 (NG), G281, 296-300 (KPTPS), and R322 each bind FMN.

It belongs to the chorismate synthase family. As to quaternary structure, homotetramer. Requires FMNH2 as cofactor.

The catalysed reaction is 5-O-(1-carboxyvinyl)-3-phosphoshikimate = chorismate + phosphate. Its pathway is metabolic intermediate biosynthesis; chorismate biosynthesis; chorismate from D-erythrose 4-phosphate and phosphoenolpyruvate: step 7/7. Its function is as follows. Catalyzes the anti-1,4-elimination of the C-3 phosphate and the C-6 proR hydrogen from 5-enolpyruvylshikimate-3-phosphate (EPSP) to yield chorismate, which is the branch point compound that serves as the starting substrate for the three terminal pathways of aromatic amino acid biosynthesis. This reaction introduces a second double bond into the aromatic ring system. The sequence is that of Chorismate synthase from Helicobacter pylori (strain G27).